A 583-amino-acid polypeptide reads, in one-letter code: Proline--tRNA ligase (583 aa).

It belongs to the class-II aminoacyl-tRNA synthetase family. ProS type 1 subfamily. Homodimer.

It is found in the cytoplasm. It carries out the reaction tRNA(Pro) + L-proline + ATP = L-prolyl-tRNA(Pro) + AMP + diphosphate. Functionally, catalyzes the attachment of proline to tRNA(Pro) in a two-step reaction: proline is first activated by ATP to form Pro-AMP and then transferred to the acceptor end of tRNA(Pro). As ProRS can inadvertently accommodate and process non-cognate amino acids such as alanine and cysteine, to avoid such errors it has two additional distinct editing activities against alanine. One activity is designated as 'pretransfer' editing and involves the tRNA(Pro)-independent hydrolysis of activated Ala-AMP. The other activity is designated 'posttransfer' editing and involves deacylation of mischarged Ala-tRNA(Pro). The misacylated Cys-tRNA(Pro) is not edited by ProRS. The protein is Proline--tRNA ligase of Methylococcus capsulatus (strain ATCC 33009 / NCIMB 11132 / Bath).